The chain runs to 536 residues: Ecdysone receptor (536 aa).

Residues 1–114 (MKTENLIVTT…GPVPRQQEEL (114 aa)) are modulating. The interval 77-107 (SPNSKLDDGNMSVHMGDGLDGKKSSSKKGPV) is disordered. 2 consecutive NR C4-type zinc fingers follow at residues 115 to 135 (CLVC…CEGC) and 151 to 175 (CKFG…LKKC). Positions 115–187 (CLVCGDRASG…VGMRPECVVP (73 aa)) form a DNA-binding region, nuclear receptor. The 237-residue stretch at 278–514 (NQVAVIYKLI…FLEEVWDVGD (237 aa)) folds into the NR LBD domain.

The protein belongs to the nuclear hormone receptor family. NR1 subfamily.

Its subcellular location is the nucleus. Functionally, receptor for ecdysone. Binds to ecdysone response elements (ECRES). The protein is Ecdysone receptor (EcR) of Chironomus tentans (Midge).